We begin with the raw amino-acid sequence, 156 residues long: ATP synthase subunit b (156 aa).

A helical transmembrane segment spans residues 7–29 (LIGQSITFIFFVWFSMKFVWPPI).

It belongs to the ATPase B chain family. F-type ATPases have 2 components, F(1) - the catalytic core - and F(0) - the membrane proton channel. F(1) has five subunits: alpha(3), beta(3), gamma(1), delta(1), epsilon(1). F(0) has three main subunits: a(1), b(2) and c(10-14). The alpha and beta chains form an alternating ring which encloses part of the gamma chain. F(1) is attached to F(0) by a central stalk formed by the gamma and epsilon chains, while a peripheral stalk is formed by the delta and b chains.

The protein localises to the cell inner membrane. F(1)F(0) ATP synthase produces ATP from ADP in the presence of a proton or sodium gradient. F-type ATPases consist of two structural domains, F(1) containing the extramembraneous catalytic core and F(0) containing the membrane proton channel, linked together by a central stalk and a peripheral stalk. During catalysis, ATP synthesis in the catalytic domain of F(1) is coupled via a rotary mechanism of the central stalk subunits to proton translocation. Functionally, component of the F(0) channel, it forms part of the peripheral stalk, linking F(1) to F(0). The protein is ATP synthase subunit b of Thiobacillus denitrificans (strain ATCC 25259 / T1).